The following is a 277-amino-acid chain: Large ribosomal subunit protein uL2 (277 aa).

Residues Arg-212–Lys-277 are disordered. A compositionally biased stretch (basic residues) spans Thr-254–Lys-277.

It belongs to the universal ribosomal protein uL2 family. As to quaternary structure, part of the 50S ribosomal subunit. Forms a bridge to the 30S subunit in the 70S ribosome.

In terms of biological role, one of the primary rRNA binding proteins. Required for association of the 30S and 50S subunits to form the 70S ribosome, for tRNA binding and peptide bond formation. It has been suggested to have peptidyltransferase activity; this is somewhat controversial. Makes several contacts with the 16S rRNA in the 70S ribosome. The chain is Large ribosomal subunit protein uL2 from Leuconostoc mesenteroides subsp. mesenteroides (strain ATCC 8293 / DSM 20343 / BCRC 11652 / CCM 1803 / JCM 6124 / NCDO 523 / NBRC 100496 / NCIMB 8023 / NCTC 12954 / NRRL B-1118 / 37Y).